The following is a 164-amino-acid chain: Peroxynitrite isomerase (164 aa).

Positions glycine 21–glycine 27 match the GXWXGXG motif. Residues lysine 130 and histidine 156 each coordinate heme b.

It belongs to the nitrobindin family. In terms of assembly, homodimer. It depends on heme b as a cofactor.

It catalyses the reaction peroxynitrite = nitrate. Its pathway is nitrogen metabolism. In terms of biological role, heme-binding protein able to scavenge peroxynitrite and to protect free L-tyrosine against peroxynitrite-mediated nitration, by acting as a peroxynitrite isomerase that converts peroxynitrite to nitrate. Therefore, this protein likely plays a role in peroxynitrite sensing and in the detoxification of reactive nitrogen and oxygen species (RNS and ROS, respectively). Is able to bind nitric oxide (NO) in vitro, but may act as a sensor of peroxynitrite levels in vivo. The sequence is that of Peroxynitrite isomerase from Nocardioides sp. (strain ATCC BAA-499 / JS614).